The chain runs to 124 residues: Aspartate 1-decarboxylase (124 aa).

Serine 25 acts as the Schiff-base intermediate with substrate; via pyruvic acid in catalysis. Serine 25 carries the post-translational modification Pyruvic acid (Ser). Threonine 57 lines the substrate pocket. Catalysis depends on tyrosine 58, which acts as the Proton donor. Glycine 71–alanine 73 lines the substrate pocket.

Belongs to the PanD family. In terms of assembly, heterooctamer of four alpha and four beta subunits. The cofactor is pyruvate. Is synthesized initially as an inactive proenzyme, which is activated by self-cleavage at a specific serine bond to produce a beta-subunit with a hydroxyl group at its C-terminus and an alpha-subunit with a pyruvoyl group at its N-terminus.

It is found in the cytoplasm. The enzyme catalyses L-aspartate + H(+) = beta-alanine + CO2. It participates in cofactor biosynthesis; (R)-pantothenate biosynthesis; beta-alanine from L-aspartate: step 1/1. Functionally, catalyzes the pyruvoyl-dependent decarboxylation of aspartate to produce beta-alanine. This Bdellovibrio bacteriovorus (strain ATCC 15356 / DSM 50701 / NCIMB 9529 / HD100) protein is Aspartate 1-decarboxylase.